The chain runs to 522 residues: Exo-alpha-(1-&gt;6)-L-arabinofuranosidase (522 aa).

Positions 39, 84, and 185 each coordinate alpha-L-arabinofuranose. E186 serves as the catalytic Proton donor/acceptor. Residues Y257, E310, and Q370 each contribute to the alpha-L-arabinofuranose site. Residue E310 is the Nucleophile of the active site.

The protein belongs to the glycosyl hydrolase 51 family. As to quaternary structure, homohexamer; trimer of dimers.

The enzyme catalyses Hydrolysis of terminal non-reducing alpha-L-arabinofuranoside residues in alpha-L-arabinosides.. It carries out the reaction (20S)-ginsenoside Rc + H2O = L-arabinofuranose + (20S)-ginsenoside Rd. Its activity is regulated as follows. Completely inhibited by Cu(2+) and partially inhibited by Co(2+) and Ba(2+). Functionally, catalyzes the hydrolysis of p-nitrophenyl-alpha-L-arabinofuranoside (pNP-alphaL-Af) and the hydrolysis of the terminal alpha-L-arabinofuranoside at the C20 position of ginsenoside Rc to produce ginsenoside Rd. Cannot hydrolyze p-nitrophenyl-alpha-L-arabinopyranoside (pNP-alphaL-Ap) and ginsenoside Rb2. This Bifidobacterium longum protein is Exo-alpha-(1-&gt;6)-L-arabinofuranosidase.